The chain runs to 299 residues: tRNA dimethylallyltransferase (299 aa).

13 to 20 serves as a coordination point for ATP; it reads GPTASGKT. 15–20 serves as a coordination point for substrate; that stretch reads TASGKT. Residues 38-41 are interaction with substrate tRNA; that stretch reads DSRQ.

It belongs to the IPP transferase family. In terms of assembly, monomer. The cofactor is Mg(2+).

The enzyme catalyses adenosine(37) in tRNA + dimethylallyl diphosphate = N(6)-dimethylallyladenosine(37) in tRNA + diphosphate. In terms of biological role, catalyzes the transfer of a dimethylallyl group onto the adenine at position 37 in tRNAs that read codons beginning with uridine, leading to the formation of N6-(dimethylallyl)adenosine (i(6)A). This chain is tRNA dimethylallyltransferase, found in Prochlorococcus marinus (strain AS9601).